The following is a 232-amino-acid chain: Homeobox protein Rhox13 (232 aa).

The disordered stretch occupies residues 45–114; sequence QAAVASSHDS…EAAAPSVAAV (70 aa). Over residues 68 to 105 the composition is skewed to acidic residues; the sequence is SDSESESDSESESDSSDSSDESDDDSSTSDEDTSDPEE. The homeobox DNA-binding region spans 148–207; the sequence is RRGPPFHFAQWQVEEMESLFEETQYPDLLTRGELARTLNVPEVKVKVWFTNRRAKQRKIE.

The protein belongs to the paired-like homeobox family.

The protein resides in the nucleus. In terms of biological role, probable transcription factor. In Mus musculus (Mouse), this protein is Homeobox protein Rhox13.